Here is a 313-residue protein sequence, read N- to C-terminus: D-alanine--D-alanine ligase (313 aa).

The ATP-grasp domain maps to 108 to 308 (KLVWQQTGVP…YSELVVKVLS (201 aa)). 138-193 (VAKLGLPLFVKPASEGSSVAVLKVKTADALPAALSEAATHDKIVIVEKSIEGGGEY) serves as a coordination point for ATP. 3 residues coordinate Mg(2+): Asp262, Glu275, and Asn277.

Belongs to the D-alanine--D-alanine ligase family. The cofactor is Mg(2+). It depends on Mn(2+) as a cofactor.

The protein localises to the cytoplasm. The catalysed reaction is 2 D-alanine + ATP = D-alanyl-D-alanine + ADP + phosphate + H(+). It participates in cell wall biogenesis; peptidoglycan biosynthesis. In terms of biological role, cell wall formation. This Burkholderia ambifaria (strain MC40-6) protein is D-alanine--D-alanine ligase.